Reading from the N-terminus, the 225-residue chain is Riboflavin kinase (225 aa).

The segment at 1–89 is unknown; that stretch reads MPDIKYLKKL…SRIFSPDLDI (89 aa). Positions 90-225 are riboflavin kinase; it reads LELEGKVLKG…LKKQGTENQK (136 aa). 99 to 104 contributes to the CDP binding site; the sequence is GLGEGQ. Mg(2+)-binding residues include T128 and N130. 2 residues coordinate FMN: T185 and E193. CDP is bound at residue 198–201; sequence IKLR.

It belongs to the archaeal riboflavin kinase family. The cofactor is Mg(2+).

It catalyses the reaction riboflavin + CTP = CDP + FMN + H(+). The protein operates within cofactor biosynthesis; FMN biosynthesis; FMN from riboflavin (CTP route): step 1/1. Functionally, catalyzes the CTP-dependent phosphorylation of riboflavin (vitamin B2) to form flavin mononucleotide (FMN). The protein is Riboflavin kinase (ribK) of Methanosarcina barkeri (strain Fusaro / DSM 804).